A 473-amino-acid chain; its full sequence is Envelope glycoprotein M (473 aa).

The Intravirion segment spans residues 1–32 (MGRPAPRGSPDSAPPTKGMTGARTAWWVWCVQ). Residues 33-53 (VATFVVSAVCVTGLLVLASVF) form a helical membrane-spanning segment. At 54-90 (RARFPCFYATASSYAGVNSTAEVRGGVAVPLRLDTQS) the chain is on the virion surface side. A helical transmembrane segment spans residues 91 to 111 (LVGTYVITAVLLLAVAVYAVV). The Intravirion segment spans residues 112–137 (GAVTSRYDRALDAGRRLAAARMAMPH). The chain crosses the membrane as a helical span at residues 138-158 (ATLIAGNVCSWLLQITVLLLA). The Virion surface portion of the chain corresponds to 159–163 (HRISQ). Residues 164–184 (LAHLVYVLHFACLVYFAAHFC) form a helical membrane-spanning segment. The Intravirion portion of the chain corresponds to 185-216 (TRGVLSGTYLRQVHGLMELAPTHHRVVGPARA). The chain crosses the membrane as a helical span at residues 217–237 (VLTNALLLGVFLCTADAAVSL). The Virion surface segment spans residues 238–250 (NTIAAFNFNFSAP). The chain crosses the membrane as a helical span at residues 251–271 (GMLICLTVLFAILVVSLLLVV). Residues 272–280 (EGVLCHYVR) lie on the Intravirion side of the membrane. Residues 281-301 (VLVGPHLGAVAATGIVGLACE) form a helical membrane-spanning segment. Residues 302 to 318 (HYYTNGYYVVETQWPGA) lie on the Virion surface side of the membrane. The helical transmembrane segment at 319-339 (QTGVRVALALVAAFALGMAVL) threads the bilayer. Over 340-473 (RCTRAYLYHR…DPVYSTVRRW (134 aa)) the chain is Intravirion. 2 disordered regions span residues 371–399 (KRVR…PEYA) and 440–473 (HPRH…VRRW).

This sequence belongs to the herpesviridae glycoprotein M family. In terms of assembly, interacts (via N-terminus) with gN (via N-terminus). The gM-gN heterodimer forms the gCII complex.

The protein localises to the virion membrane. It is found in the host Golgi apparatus. Its subcellular location is the host trans-Golgi network. It localises to the host endosome membrane. The protein resides in the host nucleus inner membrane. Its function is as follows. Envelope glycoprotein important for virion assembly and egress. Plays a role in the correct incorporation of gH-gL into virion membrane. Directs the glycoprotein N (gN) to the host trans-Golgi network. This Human herpesvirus 1 (strain 17) (HHV-1) protein is Envelope glycoprotein M.